A 284-amino-acid chain; its full sequence is Tropomyosin-1 (284 aa).

2 disordered regions span residues 1 to 26 and 96 to 124; these read MDAI…DTCE and EEDL…DENN. Positions 1 to 276 form a coiled coil; that stretch reads MDAIKKKMQA…YKSLADEMDS (276 aa). Over residues 12–26 the composition is skewed to basic and acidic residues; that stretch reads KLEKDNAMDKADTCE. The segment covering 107 to 121 has biased composition (polar residues); that stretch reads GTAQQKLLEAQQSAD.

It belongs to the tropomyosin family. Homodimer.

Its function is as follows. Tropomyosin, in association with the troponin complex, plays a central role in the calcium dependent regulation of muscle contraction. The polypeptide is Tropomyosin-1 (Bombyx mori (Silk moth)).